A 258-amino-acid chain; its full sequence is Thiazole synthase (258 aa).

Lys-98 serves as the catalytic Schiff-base intermediate with DXP. Residues Gly-159, 185–186 (AG), and 207–208 (NT) contribute to the 1-deoxy-D-xylulose 5-phosphate site.

The protein belongs to the ThiG family. Homotetramer. Forms heterodimers with either ThiH or ThiS.

The protein resides in the cytoplasm. It carries out the reaction [ThiS sulfur-carrier protein]-C-terminal-Gly-aminoethanethioate + 2-iminoacetate + 1-deoxy-D-xylulose 5-phosphate = [ThiS sulfur-carrier protein]-C-terminal Gly-Gly + 2-[(2R,5Z)-2-carboxy-4-methylthiazol-5(2H)-ylidene]ethyl phosphate + 2 H2O + H(+). The protein operates within cofactor biosynthesis; thiamine diphosphate biosynthesis. Its function is as follows. Catalyzes the rearrangement of 1-deoxy-D-xylulose 5-phosphate (DXP) to produce the thiazole phosphate moiety of thiamine. Sulfur is provided by the thiocarboxylate moiety of the carrier protein ThiS. In vitro, sulfur can be provided by H(2)S. In Cytophaga hutchinsonii (strain ATCC 33406 / DSM 1761 / CIP 103989 / NBRC 15051 / NCIMB 9469 / D465), this protein is Thiazole synthase.